Here is a 979-residue protein sequence, read N- to C-terminus: MEEDKYQLVLHNDDLERMVLYDPNSKSLLVRNSTDMLRQKSKQLVLQQQIESPYSPMPSLRSPSIPTTPTLVGGLSSQSHNNNHPSTLHIMCPYCKRSYNNNNNNNINNNISTNNNNINNNSSNNLNNLNNNINNINNGIFNNNNNNNSNSNNNNISGGNNNTMDINGNSIVSGVIAPFNPSPYYRSPISEPPFISRDYFLLLQDSSKSGVNNNNNNNNNDSTTTNNNNNNNTTPPQQQQQQNSSGLNSEFLNIGYYKKFFKEDIKIGSGGFGSVYLCRHLINGVDLGEFAVKKVPVGENLPWLFRVLREVKALETLTKHRNIINYKHSWLEYDQPADFGPKVPCLYILMEYANNGNLQDYMAEKRDLIPENEIWSFFIDLCHGIGYLHHSGIIHRDIKPPNILIHQSYDSITDREVTHLMISDFGTCDTIGPLESLAPPLYKNNIKRTGNTGTIEYLAPELLQKGVNGEYNSDYDEKCDIWSLGILLYQMAYGTLPYRYSGDPFIDEDPNRNLPSLIDEIAGFSNNRLIFPQIPQRSRDLKDMITILLRAKPHERPTISQILSTHFIQSKTKHYTINPIHLPFTKRNKFKNTSVHNTTASTIKLRRKGSISTTNSTTSSSSSTATSSSLSSTTIATTSSSNAINNTTATTTTNSNLGNNNNNNTNALISSRISPIRKTQLVEENSEDSSNEIANINPNRSLIQPIVLSDTDNDDIIIDDDDDDDDSTNNNDTNNTDNTDDEMNSGDVVGIVNNKKSSYSRSSSIRSPSSSNKLRQRTISNSGGNNGIRKALPSLEAPRSGRFKRAAIVIQRGVRSSAVYQAFYMLQALFQVWLCFDQCSTCPNTFPSPILLYPLLLLSLIPILVVNNNNNSNNMNNNNNNNNINSNGQLAHLNGSGGGGIINNGNRDTKKINTIISIIRFIYYFVISVLLPKEISCKSTSHIIPILPPIADYVVFPLLSLFKNLTLLIINLIFIFYRD.

Residues N32, N110, N120, N121, N147, N155, N161, N220, N231, and N243 are each glycosylated (N-linked (GlcNAc...) asparagine). The tract at residues 207-245 (SKSGVNNNNNNNNNDSTTTNNNNNNNTTPPQQQQQQNSS) is disordered. A compositionally biased stretch (low complexity) spans 212–244 (NNNNNNNNNDSTTTNNNNNNNTTPPQQQQQQNS). The region spanning 261-568 (FKEDIKIGSG…ISQILSTHFI (308 aa)) is the Protein kinase domain. ATP contacts are provided by residues 267–275 (IGSGGFGSV) and K293. D397 serves as the catalytic Proton acceptor. N-linked (GlcNAc...) asparagine glycosylation is found at N592, N597, N615, N645, N646, N663, and N699. A compositionally biased stretch (polar residues) spans 593-602 (TSVHNTTAST). The disordered stretch occupies residues 593–666 (TSVHNTTAST…LGNNNNNNTN (74 aa)). Residues 610-666 (SISTTNSTTSSSSSTATSSSLSSTTIATTSSSNAINNTTATTTTNSNLGNNNNNNTN) are compositionally biased toward low complexity. The segment covering 713-727 (NDDIIIDDDDDDDDS) has biased composition (acidic residues). Residues 713 to 793 (NDDIIIDDDD…GNNGIRKALP (81 aa)) are disordered. 2 stretches are compositionally biased toward low complexity: residues 728 to 737 (TNNNDTNNTD) and 753 to 773 (NNKKSSYSRSSSIRSPSSSNK). N-linked (GlcNAc...) asparagine glycans are attached at residues N731 and N734. A helical membrane pass occupies residues 846-866 (FPSPILLYPLLLLSLIPILVV). N-linked (GlcNAc...) asparagine glycosylation is found at N870 and N894. Helical transmembrane passes span 912–932 (INTIISIIRFIYYFVISVLLP) and 956–976 (FPLLSLFKNLTLLIINLIFIF).

It belongs to the protein kinase superfamily. Ser/Thr protein kinase family.

Its subcellular location is the membrane. The enzyme catalyses L-seryl-[protein] + ATP = O-phospho-L-seryl-[protein] + ADP + H(+). It carries out the reaction L-threonyl-[protein] + ATP = O-phospho-L-threonyl-[protein] + ADP + H(+). The chain is Probable serine/threonine-protein kinase iksA (iksA) from Dictyostelium discoideum (Social amoeba).